The primary structure comprises 155 residues: Small ribosomal subunit protein uS9 (155 aa).

This sequence belongs to the universal ribosomal protein uS9 family.

This chain is Small ribosomal subunit protein uS9, found in Rhizobium etli (strain CIAT 652).